A 429-amino-acid chain; its full sequence is RNA-binding protein BRN2 (429 aa).

3 RRM domains span residues 12–93 (VKLF…YADG), 100–180 (HKLF…WADT), and 330–408 (ANLF…LKRD). Residues 410–429 (GQQQQQQQSKNPLFNGLLNS) form a disordered region. Residues 418 to 429 (SKNPLFNGLLNS) show a composition bias toward polar residues.

In terms of tissue distribution, expressed in roots, stems, flowers and siliques.

The protein localises to the cytoplasm. RNA-binding protein involved in the regulation of flowering time. Acts as a repressor of the activity of SOC1, a transcriptional activator of flowering time. Binds to the 3'-UTR of SOC1 mRNA in the cytoplasm and participates in SOC1 mRNA decay, mediated by the distal region of the SOC1 3'-UTR. This chain is RNA-binding protein BRN2, found in Arabidopsis thaliana (Mouse-ear cress).